A 142-amino-acid polypeptide reads, in one-letter code: Putative nickel-responsive regulator (142 aa).

Ni(2+)-binding residues include His-77, His-88, His-90, and Cys-96.

The protein belongs to the transcriptional regulatory CopG/NikR family. In terms of assembly, homotetramer. Requires Ni(2+) as cofactor.

Functionally, transcriptional regulator. The polypeptide is Putative nickel-responsive regulator (Halobacterium salinarum (strain ATCC 700922 / JCM 11081 / NRC-1) (Halobacterium halobium)).